The primary structure comprises 365 residues: UDP-N-acetylglucosamine--N-acetylmuramyl-(pentapeptide) pyrophosphoryl-undecaprenol N-acetylglucosamine transferase (365 aa).

UDP-N-acetyl-alpha-D-glucosamine is bound by residues 17-19, Asn-129, Arg-167, Ser-194, Ile-250, 269-274, and Gln-295; these read TGG and ALTVSE.

It belongs to the glycosyltransferase 28 family. MurG subfamily.

The protein localises to the cell inner membrane. It carries out the reaction di-trans,octa-cis-undecaprenyl diphospho-N-acetyl-alpha-D-muramoyl-L-alanyl-D-glutamyl-meso-2,6-diaminopimeloyl-D-alanyl-D-alanine + UDP-N-acetyl-alpha-D-glucosamine = di-trans,octa-cis-undecaprenyl diphospho-[N-acetyl-alpha-D-glucosaminyl-(1-&gt;4)]-N-acetyl-alpha-D-muramoyl-L-alanyl-D-glutamyl-meso-2,6-diaminopimeloyl-D-alanyl-D-alanine + UDP + H(+). The protein operates within cell wall biogenesis; peptidoglycan biosynthesis. Its function is as follows. Cell wall formation. Catalyzes the transfer of a GlcNAc subunit on undecaprenyl-pyrophosphoryl-MurNAc-pentapeptide (lipid intermediate I) to form undecaprenyl-pyrophosphoryl-MurNAc-(pentapeptide)GlcNAc (lipid intermediate II). The protein is UDP-N-acetylglucosamine--N-acetylmuramyl-(pentapeptide) pyrophosphoryl-undecaprenol N-acetylglucosamine transferase of Shewanella violacea (strain JCM 10179 / CIP 106290 / LMG 19151 / DSS12).